Reading from the N-terminus, the 701-residue chain is Polyribonucleotide nucleotidyltransferase (701 aa).

Mg(2+) contacts are provided by D487 and D493. Residues 554–613 (PTMIAMKIDTDKIRDVIGKGGATIRAICEETKASIDIEDDGSIKIFGESKEAAEAARQRV) enclose the KH domain. One can recognise an S1 motif domain in the interval 623–691 (GKIYVGKVER…NRGRIKLSIK (69 aa)).

This sequence belongs to the polyribonucleotide nucleotidyltransferase family. Component of the RNA degradosome, which is a multiprotein complex involved in RNA processing and mRNA degradation. The cofactor is Mg(2+).

It is found in the cytoplasm. The catalysed reaction is RNA(n+1) + phosphate = RNA(n) + a ribonucleoside 5'-diphosphate. Involved in mRNA degradation. Catalyzes the phosphorolysis of single-stranded polyribonucleotides processively in the 3'- to 5'-direction. The protein is Polyribonucleotide nucleotidyltransferase of Pseudomonas savastanoi pv. phaseolicola (strain 1448A / Race 6) (Pseudomonas syringae pv. phaseolicola (strain 1448A / Race 6)).